The primary structure comprises 232 residues: Large ribosomal subunit protein uL1 (232 aa).

Belongs to the universal ribosomal protein uL1 family. Part of the 50S ribosomal subunit.

In terms of biological role, binds directly to 23S rRNA. The L1 stalk is quite mobile in the ribosome, and is involved in E site tRNA release. Protein L1 is also a translational repressor protein, it controls the translation of the L11 operon by binding to its mRNA. This chain is Large ribosomal subunit protein uL1, found in Azorhizobium caulinodans (strain ATCC 43989 / DSM 5975 / JCM 20966 / LMG 6465 / NBRC 14845 / NCIMB 13405 / ORS 571).